Reading from the N-terminus, the 106-residue chain is UPF0145 protein CTC_01500 (106 aa).

It belongs to the UPF0145 family.

This chain is UPF0145 protein CTC_01500, found in Clostridium tetani (strain Massachusetts / E88).